A 201-amino-acid chain; its full sequence is Small ribosomal subunit protein uS4 (201 aa).

In terms of domain architecture, S4 RNA-binding spans 91-157 (SRLDNVVYRA…VPFQIARETA (67 aa)).

This sequence belongs to the universal ribosomal protein uS4 family. As to quaternary structure, part of the 30S ribosomal subunit. Contacts protein S5. The interaction surface between S4 and S5 is involved in control of translational fidelity.

In terms of biological role, one of the primary rRNA binding proteins, it binds directly to 16S rRNA where it nucleates assembly of the body of the 30S subunit. Its function is as follows. With S5 and S12 plays an important role in translational accuracy. This is Small ribosomal subunit protein uS4 from Mycolicibacterium paratuberculosis (strain ATCC BAA-968 / K-10) (Mycobacterium paratuberculosis).